The sequence spans 92 residues: Small ribosomal subunit protein uS19 (92 aa).

Belongs to the universal ribosomal protein uS19 family.

Its function is as follows. Protein S19 forms a complex with S13 that binds strongly to the 16S ribosomal RNA. The protein is Small ribosomal subunit protein uS19 of Corynebacterium aurimucosum (strain ATCC 700975 / DSM 44827 / CIP 107346 / CN-1) (Corynebacterium nigricans).